A 325-amino-acid chain; its full sequence is Glutarate 2-hydroxylase (325 aa).

Positions 160, 162, and 292 each coordinate Fe cation.

The protein belongs to the glutarate hydroxylase family. As to quaternary structure, homotetramer. Fe(2+) is required as a cofactor.

It catalyses the reaction glutarate + 2-oxoglutarate + O2 = (S)-2-hydroxyglutarate + succinate + CO2. Its pathway is amino-acid degradation. Functionally, acts as an alpha-ketoglutarate-dependent dioxygenase catalyzing hydroxylation of glutarate (GA) to L-2-hydroxyglutarate (L2HG). Functions in a L-lysine degradation pathway that proceeds via cadaverine, glutarate and L-2-hydroxyglutarate. In Escherichia coli O127:H6 (strain E2348/69 / EPEC), this protein is Glutarate 2-hydroxylase.